An 87-amino-acid chain; its full sequence is Small ribosomal subunit protein uS15c (87 aa).

It belongs to the universal ribosomal protein uS15 family. As to quaternary structure, part of the 30S ribosomal subunit.

Its subcellular location is the plastid. It is found in the chloroplast. This Solanum tuberosum (Potato) protein is Small ribosomal subunit protein uS15c (rps15).